A 133-amino-acid chain; its full sequence is FPRL1 inhibitory protein (133 aa).

The first 28 residues, 1–28 (MKKNITKTIIASTVIAAGLLTQTNDAKA), serve as a signal peptide directing secretion.

The protein belongs to the CHIPS/FLIPr family.

It localises to the secreted. Its function is as follows. May be involved in countering the first line of host defense mechanisms. Impairs the leukocyte response to FPRL1 agonists by binding directly to host FPRL1. The chain is FPRL1 inhibitory protein (flr) from Staphylococcus aureus (strain USA300).